We begin with the raw amino-acid sequence, 477 residues long: Ribulose bisphosphate carboxylase large chain (477 aa).

The propeptide occupies 1-2 (MS). At proline 3 the chain carries N-acetylproline. Position 14 is an N6,N6,N6-trimethyllysine (lysine 14). Substrate-binding residues include asparagine 123 and threonine 173. Lysine 175 serves as the catalytic Proton acceptor. Lysine 177 provides a ligand contact to substrate. Positions 201, 203, and 204 each coordinate Mg(2+). At lysine 201 the chain carries N6-carboxylysine. The Proton acceptor role is filled by histidine 294. Positions 295, 327, and 379 each coordinate substrate.

Belongs to the RuBisCO large chain family. Type I subfamily. In terms of assembly, heterohexadecamer of 8 large chains and 8 small chains; disulfide-linked. The disulfide link is formed within the large subunit homodimers. Requires Mg(2+) as cofactor. The disulfide bond which can form in the large chain dimeric partners within the hexadecamer appears to be associated with oxidative stress and protein turnover.

The protein localises to the plastid. Its subcellular location is the chloroplast. The catalysed reaction is 2 (2R)-3-phosphoglycerate + 2 H(+) = D-ribulose 1,5-bisphosphate + CO2 + H2O. The enzyme catalyses D-ribulose 1,5-bisphosphate + O2 = 2-phosphoglycolate + (2R)-3-phosphoglycerate + 2 H(+). RuBisCO catalyzes two reactions: the carboxylation of D-ribulose 1,5-bisphosphate, the primary event in carbon dioxide fixation, as well as the oxidative fragmentation of the pentose substrate in the photorespiration process. Both reactions occur simultaneously and in competition at the same active site. The protein is Ribulose bisphosphate carboxylase large chain of Digitalis purpurea (Common foxglove).